A 182-amino-acid chain; its full sequence is Transcription termination/antitermination protein NusG (182 aa).

This sequence belongs to the NusG family.

Participates in transcription elongation, termination and antitermination. This Chlamydia pneumoniae (Chlamydophila pneumoniae) protein is Transcription termination/antitermination protein NusG.